The sequence spans 741 residues: Photosystem I P700 chlorophyll a apoprotein A2 1 (741 aa).

8 helical membrane-spanning segments follow: residues Ile-46–Ala-69, Leu-135–Gln-158, Leu-175–Ile-199, Met-273–Tyr-291, Leu-334–Tyr-357, Ala-373–Val-399, Ala-421–His-443, and Phe-524–Val-542. The [4Fe-4S] cluster site is built by Cys-566 and Cys-575. Helical transmembrane passes span Ser-582–Trp-603 and Leu-650–Ile-672. Residues His-661, Met-669, and Tyr-677 each contribute to the chlorophyll a site. Trp-678 contributes to the phylloquinone binding site. The chain crosses the membrane as a helical span at residues Val-714–Ala-734.

The protein belongs to the PsaA/PsaB family. The PsaA/B heterodimer binds the P700 chlorophyll special pair and subsequent electron acceptors. PSI consists of a core antenna complex that captures photons, and an electron transfer chain that converts photonic excitation into a charge separation. The cyanobacterial PSI reaction center is composed of one copy each of PsaA,B,C,D,E,F,I,J,K,L,M and X, and forms trimeric complexes. It depends on PSI electron transfer chain: 5 chlorophyll a, 1 chlorophyll a', 2 phylloquinones and 3 4Fe-4S clusters. PSI core antenna: 90 chlorophyll a, 22 carotenoids, 3 phospholipids and 1 galactolipid. P700 is a chlorophyll a/chlorophyll a' dimer, A0 is one or more chlorophyll a, A1 is one or both phylloquinones and FX is a shared 4Fe-4S iron-sulfur center. as a cofactor.

The protein localises to the cellular thylakoid membrane. It catalyses the reaction reduced [plastocyanin] + hnu + oxidized [2Fe-2S]-[ferredoxin] = oxidized [plastocyanin] + reduced [2Fe-2S]-[ferredoxin]. Its function is as follows. PsaA and PsaB bind P700, the primary electron donor of photosystem I (PSI), as well as the electron acceptors A0, A1 and FX. PSI is a plastocyanin/cytochrome c6-ferredoxin oxidoreductase, converting photonic excitation into a charge separation, which transfers an electron from the donor P700 chlorophyll pair to the spectroscopically characterized acceptors A0, A1, FX, FA and FB in turn. Oxidized P700 is reduced on the lumenal side of the thylakoid membrane by plastocyanin or cytochrome c6. This Nostoc sp. (strain PCC 7120 / SAG 25.82 / UTEX 2576) protein is Photosystem I P700 chlorophyll a apoprotein A2 1 (psaB1).